A 476-amino-acid chain; its full sequence is Glycogen synthase (476 aa).

K15 is an ADP-alpha-D-glucose binding site.

It belongs to the glycosyltransferase 1 family. Bacterial/plant glycogen synthase subfamily.

The enzyme catalyses [(1-&gt;4)-alpha-D-glucosyl](n) + ADP-alpha-D-glucose = [(1-&gt;4)-alpha-D-glucosyl](n+1) + ADP + H(+). It functions in the pathway glycan biosynthesis; glycogen biosynthesis. Functionally, synthesizes alpha-1,4-glucan chains using ADP-glucose. The chain is Glycogen synthase from Yersinia pseudotuberculosis serotype O:1b (strain IP 31758).